The sequence spans 223 residues: Ribose-5-phosphate isomerase A (223 aa).

Substrate contacts are provided by residues 29–32, 82–85, and 95–98; these read TGST, DGAD, and KGGG. Glu-104 (proton acceptor) is an active-site residue. Lys-122 lines the substrate pocket.

It belongs to the ribose 5-phosphate isomerase family. Homodimer.

It catalyses the reaction aldehydo-D-ribose 5-phosphate = D-ribulose 5-phosphate. It participates in carbohydrate degradation; pentose phosphate pathway; D-ribose 5-phosphate from D-ribulose 5-phosphate (non-oxidative stage): step 1/1. In terms of biological role, catalyzes the reversible conversion of ribose-5-phosphate to ribulose 5-phosphate. The chain is Ribose-5-phosphate isomerase A from Neisseria meningitidis serogroup B (strain ATCC BAA-335 / MC58).